We begin with the raw amino-acid sequence, 230 residues long: Sugar fermentation stimulation protein homolog (230 aa).

It belongs to the SfsA family.

This chain is Sugar fermentation stimulation protein homolog, found in Clostridium tetani (strain Massachusetts / E88).